We begin with the raw amino-acid sequence, 1034 residues long: Isoleucine--tRNA ligase (1034 aa).

Residues 46 to 56 (PYCSGAIHLGT) carry the 'HIGH' region motif. The short motif at 598-602 (KMSKS) is the 'KMSKS' region element. K601 lines the ATP pocket.

This sequence belongs to the class-I aminoacyl-tRNA synthetase family. IleS type 2 subfamily. As to quaternary structure, monomer. The cofactor is Zn(2+).

The protein localises to the cytoplasm. The catalysed reaction is tRNA(Ile) + L-isoleucine + ATP = L-isoleucyl-tRNA(Ile) + AMP + diphosphate. In terms of biological role, catalyzes the attachment of isoleucine to tRNA(Ile). As IleRS can inadvertently accommodate and process structurally similar amino acids such as valine, to avoid such errors it has two additional distinct tRNA(Ile)-dependent editing activities. One activity is designated as 'pretransfer' editing and involves the hydrolysis of activated Val-AMP. The other activity is designated 'posttransfer' editing and involves deacylation of mischarged Val-tRNA(Ile). The chain is Isoleucine--tRNA ligase from Methanococcus maripaludis (strain DSM 14266 / JCM 13030 / NBRC 101832 / S2 / LL).